Reading from the N-terminus, the 408-residue chain is MMVKVASITKLEDGSIVTPKGFSAIGTAIGLKKGKKDLGAIVCDTPASCAAVYTTNQIQAAPLQVTKDSIATEGKLQAIIVNSGNANACTGMKGLQDAYEMRALGAEHFGVKENYVAVASTGVIGVPLPMEIIRKGIVTLIPAKEENEAHSFSEAILTTDLITKETCYEMIIDGKKVTIAGVAKGSGMIHPNMATMLSFITTDAHIEHDVLQTALSQITNHTFNQITVDGDTSTNDMVIAMASGLSETKPIDMEHADWETFVFALQKVCEDLAKKIAQDGEGATKLIEVNVLGAQTNEEAKKIAKQIVGSSLVKTAIHGEDPNWGRIISSIGQSEVAINPNTIDITLQSIVVLKNSEPQMFSEEEMKMRLQEHEIMIDVYLHLGEETGSAWGCDLSYEYVKINACYRT.

Substrate contacts are provided by Thr-158, Lys-184, Thr-195, Glu-281, Asn-403, and Thr-408. The active-site Nucleophile is the Thr-195.

The protein belongs to the ArgJ family. Heterotetramer of two alpha and two beta chains.

Its subcellular location is the cytoplasm. The catalysed reaction is N(2)-acetyl-L-ornithine + L-glutamate = N-acetyl-L-glutamate + L-ornithine. The enzyme catalyses L-glutamate + acetyl-CoA = N-acetyl-L-glutamate + CoA + H(+). The protein operates within amino-acid biosynthesis; L-arginine biosynthesis; L-ornithine and N-acetyl-L-glutamate from L-glutamate and N(2)-acetyl-L-ornithine (cyclic): step 1/1. Its pathway is amino-acid biosynthesis; L-arginine biosynthesis; N(2)-acetyl-L-ornithine from L-glutamate: step 1/4. In terms of biological role, catalyzes two activities which are involved in the cyclic version of arginine biosynthesis: the synthesis of N-acetylglutamate from glutamate and acetyl-CoA as the acetyl donor, and of ornithine by transacetylation between N(2)-acetylornithine and glutamate. In Bacillus cereus (strain ZK / E33L), this protein is Arginine biosynthesis bifunctional protein ArgJ.